The following is a 521-amino-acid chain: Glucose-6-phosphate isomerase (521 aa).

Glu-351 functions as the Proton donor in the catalytic mechanism. Residues His-382 and Lys-491 contribute to the active site.

The protein belongs to the GPI family.

It localises to the cytoplasm. It carries out the reaction alpha-D-glucose 6-phosphate = beta-D-fructose 6-phosphate. Its pathway is carbohydrate biosynthesis; gluconeogenesis. It participates in carbohydrate degradation; glycolysis; D-glyceraldehyde 3-phosphate and glycerone phosphate from D-glucose: step 2/4. Catalyzes the reversible isomerization of glucose-6-phosphate to fructose-6-phosphate. The polypeptide is Glucose-6-phosphate isomerase (Polaromonas naphthalenivorans (strain CJ2)).